We begin with the raw amino-acid sequence, 62 residues long: Probable tautomerase SH1546 (62 aa).

Proline 2 functions as the Proton acceptor; via imino nitrogen in the catalytic mechanism.

This sequence belongs to the 4-oxalocrotonate tautomerase family.

The sequence is that of Probable tautomerase SH1546 from Staphylococcus haemolyticus (strain JCSC1435).